The following is a 167-amino-acid chain: Protein DLS1 (167 aa).

At Ser17 the chain carries Phosphoserine.

Component of the ISW2 complex, which at least consists of ISW2, ITC1, DLS1 and DPB4.

The protein localises to the nucleus. Functions as a component of the ISW2 complex, which acts in remodeling the chromatin by catalyzing an ATP-dependent alteration in the structure of nucleosomal DNA. The ISW2 complex is involved in coordinating transcriptional repression and in inheritance of telomeric silencing. It is involved in repression of MAT a-specific genes, INO1, and early meiotic genes during mitotic growth dependent upon transcription factor UME6 and in a parallel pathway to the RPD3-SIN3 histone deacetylase complex. DLS1 is partially required for the ISW2 complex chromatin remodeling activity and is not required for its interaction with chromatin. This chain is Protein DLS1 (DLS1), found in Saccharomyces cerevisiae (strain ATCC 204508 / S288c) (Baker's yeast).